The chain runs to 151 residues: Urease accessory protein UreE (151 aa).

This sequence belongs to the UreE family.

The protein resides in the cytoplasm. Functionally, involved in urease metallocenter assembly. Binds nickel. Probably functions as a nickel donor during metallocenter assembly. The protein is Urease accessory protein UreE of Lachnoclostridium phytofermentans (strain ATCC 700394 / DSM 18823 / ISDg) (Clostridium phytofermentans).